A 1430-amino-acid chain; its full sequence is FYVE, RhoGEF and PH domain-containing protein 6 (1430 aa).

Residues 1-36 are disordered; it reads MTSAAEIKKPPVAPKPKFVVANNKPAPPPIAPKPDI. The span at 15-24 shows a compositional bias: low complexity; sequence KPKFVVANNK. S231 is subject to Phosphoserine. The disordered stretch occupies residues 330–351; the sequence is CVDTPSESTEEPGNSDSSSSCL. The segment covering 334–351 has biased composition (polar residues); that stretch reads PSESTEEPGNSDSSSSCL. Residue S515 is modified to Phosphoserine. The segment at 516–538 is disordered; it reads EELLEKSSYPSSEEKSSEKSLER. A compositionally biased stretch (basic and acidic residues) spans 527–538; it reads SEEKSSEKSLER. A phosphoserine mark is found at S554, S605, S692, and S721. 2 disordered regions span residues 695–739 and 800–869; these read NYSL…PYKS and PDGQ…NGMK. Residues 728–739 show a composition bias toward polar residues; it reads SRESSSQAPYKS. Acidic residues predominate over residues 831 to 847; the sequence is PSDEEEIINSSDEDDVS. Residues 851–868 are compositionally biased toward basic and acidic residues; it reads SKGEPDPLEDKQDEDNGM. The 190-residue stretch at 871–1060 folds into the DH domain; that stretch reads KVHHIAKEIM…IEVANHANDT (190 aa). The 95-residue stretch at 1089–1183 folds into the PH 1 domain; that stretch reads VFLKEGILMK…WLEAISRAIE (95 aa). S1197 is subject to Phosphoserine. The segment at 1222–1281 adopts an FYVE-type zinc-finger fold; that stretch reads DTRATMCMICTSEFTLTWRRHHCRACGKIVCQACSSNKYGLDYLKNQPARVCEHCFQELQ. C1228, C1231, C1244, C1247, C1252, C1255, C1273, and C1276 together coordinate Zn(2+). A PH 2 domain is found at 1333 to 1429; that stretch reads DSSMSGYLYR…WIEAFQEGTI (97 aa).

The protein localises to the cytoplasm. It localises to the cytoskeleton. Its function is as follows. May activate CDC42, a member of the Ras-like family of Rho- and Rac proteins, by exchanging bound GDP for free GTP. May play a role in regulating the actin cytoskeleton and cell shape. The sequence is that of FYVE, RhoGEF and PH domain-containing protein 6 (FGD6) from Homo sapiens (Human).